Reading from the N-terminus, the 1293-residue chain is DNA-directed RNA polymerase subunit beta' (1293 aa).

The Zn(2+) site is built by Cys-60, Cys-62, Cys-75, and Cys-78. Asp-535, Asp-537, and Asp-539 together coordinate Mg(2+). Residues Cys-877, Cys-953, Cys-960, and Cys-963 each contribute to the Zn(2+) site.

Belongs to the RNA polymerase beta' chain family. As to quaternary structure, the RNAP catalytic core consists of 2 alpha, 1 beta, 1 beta' and 1 omega subunit. When a sigma factor is associated with the core the holoenzyme is formed, which can initiate transcription. Mg(2+) is required as a cofactor. Zn(2+) serves as cofactor.

It catalyses the reaction RNA(n) + a ribonucleoside 5'-triphosphate = RNA(n+1) + diphosphate. In terms of biological role, DNA-dependent RNA polymerase catalyzes the transcription of DNA into RNA using the four ribonucleoside triphosphates as substrates. In Kineococcus radiotolerans (strain ATCC BAA-149 / DSM 14245 / SRS30216), this protein is DNA-directed RNA polymerase subunit beta'.